A 366-amino-acid chain; its full sequence is 3-dehydroquinate synthase (366 aa).

NAD(+) contacts are provided by residues 75-80 (DGEQYK), 109-113 (GVIGD), 133-134 (TT), Lys-146, Lys-155, and 173-176 (CLST). Zn(2+) is bound by residues Glu-188, His-251, and His-268.

The protein belongs to the sugar phosphate cyclases superfamily. Dehydroquinate synthase family. Requires NAD(+) as cofactor. It depends on Co(2+) as a cofactor. Zn(2+) is required as a cofactor.

It is found in the cytoplasm. The enzyme catalyses 7-phospho-2-dehydro-3-deoxy-D-arabino-heptonate = 3-dehydroquinate + phosphate. Its pathway is metabolic intermediate biosynthesis; chorismate biosynthesis; chorismate from D-erythrose 4-phosphate and phosphoenolpyruvate: step 2/7. Its function is as follows. Catalyzes the conversion of 3-deoxy-D-arabino-heptulosonate 7-phosphate (DAHP) to dehydroquinate (DHQ). The sequence is that of 3-dehydroquinate synthase from Vibrio parahaemolyticus serotype O3:K6 (strain RIMD 2210633).